A 35-amino-acid chain; its full sequence is Sperm protamine alpha isoform 2 (35 aa).

A disordered region spans residues 1-35; the sequence is MPRRRRRASRPIRRRRRARRSTAVRRRRRVVRRRR. A phosphoserine mark is found at Ser9 and Ser21.

In terms of processing, phosphorylated in immature sperm. Dephosphorylated in mature sperm allowing a stronger interaction with DNA. Gonads.

Its subcellular location is the nucleus. It localises to the chromosome. Protamines substitute for histones in the chromatin of sperm during the haploid phase of spermatogenesis. They compact sperm DNA into a highly condensed, stable and inactive complex. This is Sperm protamine alpha isoform 2 from Scomber scombrus (Atlantic mackerel).